The chain runs to 509 residues: Ribonuclease Y (509 aa).

Residues 5-25 (IAGVSGIAGAAVGAGACYLWL) form a helical membrane-spanning segment. A KH domain is found at 199-265 (LINLVNLPSD…TRVIEILIED (67 aa)). The HD domain occupies 325 to 418 (ALAHTLEVAK…VCAADTLSAA (94 aa)).

Belongs to the RNase Y family.

It localises to the cell membrane. In terms of biological role, endoribonuclease that initiates mRNA decay. The chain is Ribonuclease Y from Sulfurovum sp. (strain NBC37-1).